Reading from the N-terminus, the 442-residue chain is tRNA modification GTPase MnmE (442 aa).

Residues arginine 22, glutamate 79, and lysine 118 each coordinate (6S)-5-formyl-5,6,7,8-tetrahydrofolate. Residues 215 to 365 (EIPIAIVGRP…LEKAILFEYQ (151 aa)) enclose the TrmE-type G domain. Asparagine 225 contributes to the K(+) binding site. GTP is bound by residues 225–230 (NVGKSS), 244–250 (TNIEGTT), and 269–272 (DTAG). Position 229 (serine 229) interacts with Mg(2+). K(+)-binding residues include threonine 244, isoleucine 246, and threonine 249. Mg(2+) is bound at residue threonine 250. Residue lysine 442 participates in (6S)-5-formyl-5,6,7,8-tetrahydrofolate binding.

It belongs to the TRAFAC class TrmE-Era-EngA-EngB-Septin-like GTPase superfamily. TrmE GTPase family. Homodimer. Heterotetramer of two MnmE and two MnmG subunits. It depends on K(+) as a cofactor.

Its subcellular location is the cytoplasm. Functionally, exhibits a very high intrinsic GTPase hydrolysis rate. Involved in the addition of a carboxymethylaminomethyl (cmnm) group at the wobble position (U34) of certain tRNAs, forming tRNA-cmnm(5)s(2)U34. The protein is tRNA modification GTPase MnmE of Mycoplasmopsis pulmonis (strain UAB CTIP) (Mycoplasma pulmonis).